Here is a 334-residue protein sequence, read N- to C-terminus: F-box only protein 16 (334 aa).

One can recognise an F-box domain in the interval 86 to 132 (LDFTTKLPRVLSVYIFSFLDPRSLCRCAQVSWYWKSLAELDQLWMLK). Disordered stretches follow at residues 168 to 222 (PKTP…WRSS) and 314 to 334 (LEHL…QSQS). A compositionally biased stretch (low complexity) spans 194–204 (SPSLAFRSSSS). Residues 210–222 (NPGEKELPPWRSS) are compositionally biased toward basic and acidic residues. Over residues 323-334 (LQSPSPRLQSQS) the composition is skewed to low complexity.

As to quaternary structure, part of a SCF (SKP1-cullin-F-box) protein ligase complex.

In terms of biological role, probably recognizes and binds to some phosphorylated proteins and promotes their ubiquitination and degradation. This chain is F-box only protein 16 (Fbxo16), found in Mus musculus (Mouse).